Here is a 604-residue protein sequence, read N- to C-terminus: Aspartate--tRNA(Asp/Asn) ligase (604 aa).

E169 contacts L-aspartate. Positions 193–196 (QLFK) are aspartate. R215 lines the L-aspartate pocket. Residues 215-217 (RDE) and Q224 each bind ATP. H456 serves as a coordination point for L-aspartate. ATP is bound at residue E490. An L-aspartate-binding site is contributed by R497. ATP is bound at residue 542–545 (GWDR). The tract at residues 571–604 (PLTGAPAPITAQQRKEAGVDAQPEPKQAEAEPEA) is disordered.

It belongs to the class-II aminoacyl-tRNA synthetase family. Type 1 subfamily. As to quaternary structure, homodimer.

Its subcellular location is the cytoplasm. The enzyme catalyses tRNA(Asx) + L-aspartate + ATP = L-aspartyl-tRNA(Asx) + AMP + diphosphate. Aspartyl-tRNA synthetase with relaxed tRNA specificity since it is able to aspartylate not only its cognate tRNA(Asp) but also tRNA(Asn). Reaction proceeds in two steps: L-aspartate is first activated by ATP to form Asp-AMP and then transferred to the acceptor end of tRNA(Asp/Asn). The sequence is that of Aspartate--tRNA(Asp/Asn) ligase from Micrococcus luteus (strain ATCC 4698 / DSM 20030 / JCM 1464 / CCM 169 / CCUG 5858 / IAM 1056 / NBRC 3333 / NCIMB 9278 / NCTC 2665 / VKM Ac-2230) (Micrococcus lysodeikticus).